Here is a 329-residue protein sequence, read N- to C-terminus: Ribosomal RNA small subunit methyltransferase C (329 aa).

It belongs to the methyltransferase superfamily. RsmC family. Monomer.

It localises to the cytoplasm. The enzyme catalyses guanosine(1207) in 16S rRNA + S-adenosyl-L-methionine = N(2)-methylguanosine(1207) in 16S rRNA + S-adenosyl-L-homocysteine + H(+). Specifically methylates the guanine in position 1207 of 16S rRNA in the 30S particle. In Haemophilus ducreyi (strain 35000HP / ATCC 700724), this protein is Ribosomal RNA small subunit methyltransferase C.